The following is a 70-amino-acid chain: Conotoxin TxMMSK-02 (70 aa).

An N-terminal signal peptide occupies residues 1–20 (MMSKLGALLTICLLLFSLTA). Positions 21–53 (VPLDGDQHADQPAQRLQDRIPTEDHPLFDPNKR) are excised as a propeptide. Disulfide bonds link Cys-54-Cys-68, Cys-55-Cys-64, and Cys-60-Cys-67. 4-hydroxyproline is present on Pro-66. Tyr-69 carries the post-translational modification Tyrosine amide.

It belongs to the conotoxin M superfamily. As to expression, expressed by the venom duct.

It is found in the secreted. In Conus textile (Cloth-of-gold cone), this protein is Conotoxin TxMMSK-02.